A 155-amino-acid chain; its full sequence is Small ribosomal subunit protein uS7c (155 aa).

This sequence belongs to the universal ribosomal protein uS7 family. Part of the 30S ribosomal subunit.

It is found in the plastid. Its subcellular location is the chloroplast. Its function is as follows. One of the primary rRNA binding proteins, it binds directly to 16S rRNA where it nucleates assembly of the head domain of the 30S subunit. This is Small ribosomal subunit protein uS7c (rps7) from Canella winterana (Wild cinnamon).